The sequence spans 318 residues: Taste receptor type 2 member 7 (318 aa).

At 1–9 the chain is on the extracellular side; that stretch reads MTDKVQTTL. Residues 10–30 form a helical membrane-spanning segment; that stretch reads LFLAIGEFSVGILGNAFIGLV. The Cytoplasmic segment spans residues 31 to 55; that stretch reads NCMDWVKKRKIASIDLILTSLAISR. A helical transmembrane segment spans residues 56–76; the sequence is ICLLCVILLDCFMLVLYPDVY. Topologically, residues 77-94 are extracellular; it reads ATGKQMRIIDFFWTLTNH. A helical membrane pass occupies residues 95 to 115; that stretch reads LSIWFATCLSIYYFFKIANFF. Over 116 to 128 the chain is Cytoplasmic; the sequence is HPLFLWMKWRIDR. The helical transmembrane segment at 129–149 threads the bilayer; the sequence is VISWILLGCMVLSVFINLPAT. Over 150–187 the chain is Extracellular; that stretch reads ENLNADFRRCVKAKRKTNLTWSCRVTKAQHASTKLFLN. Residue N167 is glycosylated (N-linked (GlcNAc...) asparagine). The chain crosses the membrane as a helical span at residues 188-208; that stretch reads LVTLLPFSVCLMSFFLLILSL. Residues 209-235 are Cytoplasmic-facing; that stretch reads WRHIRRMQLSATGCRDPSTEAHVRALK. A helical membrane pass occupies residues 236–256; that stretch reads AVISFLLLFIAYYLSFLIATS. At 257 to 266 the chain is on the extracellular side; the sequence is SYFIPETELA. The chain crosses the membrane as a helical span at residues 267–287; it reads VIFGEFIALIYPSSHSFILIL. At 288–318 the chain is on the cytoplasmic side; the sequence is GNSKLRRASLKVLWTVMSILKGRKFQQHKQI.

Belongs to the G-protein coupled receptor T2R family.

The protein resides in the membrane. Its function is as follows. Gustducin-coupled receptor implicated in the perception of bitter compounds in the oral cavity and the gastrointestinal tract. Signals through PLCB2 and the calcium-regulated cation channel TRPM5. In Macaca mulatta (Rhesus macaque), this protein is Taste receptor type 2 member 7 (TAS2R7).